The sequence spans 122 residues: UPF0102 protein ECH_0093 (122 aa).

The protein belongs to the UPF0102 family.

This is UPF0102 protein ECH_0093 from Ehrlichia chaffeensis (strain ATCC CRL-10679 / Arkansas).